The following is a 1027-amino-acid chain: Sodium/potassium-transporting ATPase subunit alpha-1 (1027 aa).

The propeptide occupies 1–5; sequence MGVGD. A compositionally biased stretch (basic and acidic residues) spans 1 to 10; sequence MGVGDGRDQY. The disordered stretch occupies residues 1–39; that stretch reads MGVGDGRDQYELAAMSEQSGKKKSKNKKEKKEKDMDELK. Over 6-90 the chain is Cytoplasmic; sequence GRDQYELAAM…NALTPPPTTP (85 aa). Phosphoserine; by PKC is present on Ser-16. Positions 29 to 39 are enriched in basic and acidic residues; that stretch reads EKKEKDMDELK. The segment at 85–87 is interaction with phosphoinositide-3 kinase; it reads PPP. A helical membrane pass occupies residues 91–111; it reads EWVKFCKQMFGGFSMLLWTGA. Residues 112–134 are Extracellular-facing; that stretch reads VLCFLAYGILAAMEDEPANDNLY. A helical transmembrane segment spans residues 135 to 155; that stretch reads LGVVLSAVVIITGCFSYYQDA. Over 156-291 the chain is Cytoplasmic; that stretch reads KSSKIMDSFK…VGRTPISIEI (136 aa). A disordered region spans residues 217-238; the sequence is DNSSLTGESEPQTRSPDFSNDN. The helical transmembrane segment at 292–311 threads the bilayer; that stretch reads EHFIHIITGVAVFLGVSFLL. Residues 312–323 lie on the Extracellular side of the membrane; it reads LSLVLGYSWLEA. Residues 324 to 341 traverse the membrane as a helical segment; that stretch reads VIFLIGIIVANVPEGLLA. Topologically, residues 342–776 are cytoplasmic; that stretch reads TVTVCLTLTA…EEGRLIFDNL (435 aa). The active-site 4-aspartylphosphate intermediate is Asp-379. Lys-490 is an ATP binding site. Residues Asp-721 and Asp-725 each coordinate Mg(2+). The helical transmembrane segment at 777-796 threads the bilayer; the sequence is KKSIAYTLTSNIPEITPFLF. At 797 to 806 the chain is on the extracellular side; it reads FIIANIPLPL. The helical transmembrane segment at 807-827 threads the bilayer; the sequence is GTVTILCIDLGTDMLPAISLA. Topologically, residues 828 to 847 are cytoplasmic; it reads YEAAESDIMKRQPRNPKTDK. The chain crosses the membrane as a helical span at residues 848–870; the sequence is LVNERLISIAYGQIGMIQALAGF. Over 871–922 the chain is Extracellular; it reads FTYFVILAENGFLPPRLLGIRMNWDDKYINDLEDSYGQQWTYEQRKIVEFTC. The chain crosses the membrane as a helical span at residues 923–942; that stretch reads HTAFFTSIVIVQWADLIICK. Topologically, residues 943-955 are cytoplasmic; sequence TRRNSVFQQGMKN. Ser-947 bears the Phosphoserine; by PKA mark. A helical transmembrane segment spans residues 956–974; it reads KILIFGLFEETALAAFLSY. Residues 975–989 lie on the Extracellular side of the membrane; it reads CPGMDVALRMYPLKP. Residues 990–1010 form a helical membrane-spanning segment; that stretch reads NWWFCAFPYSLLIFIYDEIRK. Topologically, residues 1011 to 1027 are cytoplasmic; the sequence is LILRRNPGGWMERETYY.

It belongs to the cation transport ATPase (P-type) (TC 3.A.3) family. Type IIC subfamily. In terms of assembly, the sodium/potassium-transporting ATPase is composed of a catalytic alpha subunit, an auxiliary non-catalytic beta subunit and an additional regulatory subunit.

It localises to the cell membrane. The protein resides in the sarcolemma. The catalysed reaction is K(+)(out) + Na(+)(in) + ATP + H2O = K(+)(in) + Na(+)(out) + ADP + phosphate + H(+). Functionally, this is the catalytic component of the active enzyme, which catalyzes the hydrolysis of ATP coupled with the exchange of sodium and potassium ions across the plasma membrane. This action creates the electrochemical gradient of sodium and potassium ions, providing the energy for active transport of various nutrients. This chain is Sodium/potassium-transporting ATPase subunit alpha-1 (atp1a1), found in Catostomus commersonii (White sucker).